The chain runs to 128 residues: UPF0325 protein YaeH (128 aa).

The protein belongs to the UPF0325 family.

This chain is UPF0325 protein YaeH, found in Escherichia coli (strain ATCC 8739 / DSM 1576 / NBRC 3972 / NCIMB 8545 / WDCM 00012 / Crooks).